A 562-amino-acid chain; its full sequence is Tetratricopeptide repeat protein 39A (562 aa).

TPR repeat units lie at residues 273 to 306, 463 to 496, and 504 to 537; these read AIFLFFAGRIEEIKGNIDEAISRFEECCESQQNW, CVVKLLKGLCYKYLGRIPEAVESFSYIQLNEKRI, and PNAMLELALLYLQLEKKEEALRLLENAKNNYKNY.

Belongs to the TTC39 family.

The sequence is that of Tetratricopeptide repeat protein 39A (ttc39a) from Xenopus tropicalis (Western clawed frog).